The chain runs to 92 residues: Large ribosomal subunit protein bL31 (92 aa).

The disordered stretch occupies residues 66-92 (GMGSANPDVDAPAPKKAAKKSDAESDS). Positions 70 to 80 (ANPDVDAPAPK) are enriched in low complexity.

It belongs to the bacterial ribosomal protein bL31 family. Type A subfamily. As to quaternary structure, part of the 50S ribosomal subunit.

Its function is as follows. Binds the 23S rRNA. This is Large ribosomal subunit protein bL31 from Synechococcus sp. (strain RCC307).